A 984-amino-acid polypeptide reads, in one-letter code: Calsyntenin-1 (984 aa).

The first 18 residues, 1-18, serve as a signal peptide directing secretion; the sequence is MRTAYFIFVGALLGVSYA. Over 19-850 the chain is Extracellular; it reads KHHHAARAPI…VGQGAIAGGA (832 aa). 2 Cadherin domains span residues 66-142 and 143-257; these read YLLT…APEI and ENPW…APGV. N-linked (GlcNAc...) asparagine glycans are attached at residues N206 and N305. The helical transmembrane segment at 851–871 threads the bilayer; sequence VAVVVVVCVGFLLVLLVIGVL. At 872-984 the chain is on the cytoplasmic side; it reads KMRDTPMPRR…ISTNARSYRV (113 aa). The disordered stretch occupies residues 878–959; it reads MPRRRRQKRQ…QTEVLPHLDA (82 aa). The span at 886 to 896 shows a compositional bias: basic and acidic residues; it reads RQSDGGMHWDD. Over residues 918–951 the composition is skewed to acidic residues; that stretch reads EFSDEEEEEETDGESECSYRDEEDDVSEDEEDQT.

It belongs to the calsyntenin family. As to quaternary structure, interacts with isoform c of daf-2 (daf-2c); promoting daf-2c localization to synaptic regions. Interacts with klc-2. Interacts with unc-104. Post-translationally, a proportion of the protein is proteolytically cleaved before the transmembrane domain in neurons, leading to release in the extracellular space. In terms of tissue distribution, widely expressed in the nervous system. Highly expressed in many head neurons, including most amphid sensory neurons. Also expressed in other tissues, such as intestine and gonadal sheath cells.

It is found in the golgi apparatus membrane. Its subcellular location is the perikaryon. The protein localises to the cell projection. The protein resides in the axon. It localises to the secreted. It is found in the synaptic cleft. Cell adhesion molecule involved in associative learning and memory. Acts as a regulator of GABAergic synaptic transmission at neuromuscular junctions by regulating GABA synaptic vesicle precursor transport: possibly functions as a cargo adapter for unc-104-mediated transport of synaptic vesicle precursors. Promotes localization of isoform c of daf-2 (daf-2c) to synaptic regions by acting as a signaling adapter between klc-2 and daf-2c. Functionally, acts as aregulator of glutamate signaling in the sensory neurons by inhibiting the activity of command interneurons, thereby negatively regulating motor circuit activity and locomotion. This Caenorhabditis elegans protein is Calsyntenin-1.